Consider the following 89-residue polypeptide: cAMP-regulated phosphoprotein 21 (89 aa).

Residues 1-89 are disordered; sequence MSEQGDLNQA…GGESLQDQTL (89 aa). Ser2 bears the N-acetylserine mark. Over residues 9 to 25 the composition is skewed to low complexity; the sequence is QAIAEEGGTEQETATPE. Ser33 bears the Phosphoserine mark. Basic and acidic residues predominate over residues 40–53; the sequence is LELQRRLEAQNQER. Ser56 is subject to Phosphoserine.

In terms of assembly, interacts with CALM1. In terms of processing, phosphorylation at Ser-56 favors interaction with CALM1.

It localises to the cytoplasm. Functionally, may act as a competitive inhibitor of calmodulin-dependent enzymes such as calcineurin in neurons. This chain is cAMP-regulated phosphoprotein 21 (ARPP21), found in Pongo abelii (Sumatran orangutan).